The primary structure comprises 147 residues: uncharacterized protein (147 aa).

The ABM domain maps to 50 to 138 (IVVAGNIKVK…LLAKPAEIKI (89 aa)).

It belongs to the LsrG family.

This is an uncharacterized protein from Synechocystis sp. (strain ATCC 27184 / PCC 6803 / Kazusa).